The primary structure comprises 289 residues: MWRSCLRLRDGGRRLLNRPAGGPSASMSPGPTIPSPARAYAPPTERKRFYQNVSITQGEGGFEINLDHRKLKTPQAKLFTVPSEALAIAVATEWDSQQDTIKYYTMHLTTLCNTSLDNPTQRNKDQLIRAAVKFLDTDTICYRVEEPETLVELQRNEWDPIIEWAEKRYGVEISSSTSIMGPSIPAKTREVLVSHLASYNTWALQGIEFVAAQLKSMVLTLGLIDLRLTVEQAVLLSRLEEEYQIQKWGNIEWAHDYELQELRARTAAGTLFIHLCSESTTVKHKLLKE.

The N-terminal 40 residues, 1-40, are a transit peptide targeting the mitochondrion; it reads MWRSCLRLRDGGRRLLNRPAGGPSASMSPGPTIPSPARAY. Positions 13–40 are disordered; that stretch reads RRLLNRPAGGPSASMSPGPTIPSPARAY. At Lys-133 the chain carries N6-succinyllysine.

It belongs to the ATP12 family. As to quaternary structure, interacts with ATP5F1B; involved in the assembly of the F1 component of the mitochondrial ATP synthase (ATPase). Interacts with FMC1. Widely expressed.

It is found in the mitochondrion inner membrane. In terms of biological role, plays a role in the assembly of the F1 component of the mitochondrial ATP synthase (ATPase). The sequence is that of ATP synthase mitochondrial F1 complex assembly factor 2 from Homo sapiens (Human).